The following is a 253-amino-acid chain: 3-deoxy-manno-octulosonate cytidylyltransferase (253 aa).

The protein belongs to the KdsB family.

The protein localises to the cytoplasm. It carries out the reaction 3-deoxy-alpha-D-manno-oct-2-ulosonate + CTP = CMP-3-deoxy-beta-D-manno-octulosonate + diphosphate. It functions in the pathway nucleotide-sugar biosynthesis; CMP-3-deoxy-D-manno-octulosonate biosynthesis; CMP-3-deoxy-D-manno-octulosonate from 3-deoxy-D-manno-octulosonate and CTP: step 1/1. It participates in bacterial outer membrane biogenesis; lipopolysaccharide biosynthesis. In terms of biological role, activates KDO (a required 8-carbon sugar) for incorporation into bacterial lipopolysaccharide in Gram-negative bacteria. In Geotalea daltonii (strain DSM 22248 / JCM 15807 / FRC-32) (Geobacter daltonii), this protein is 3-deoxy-manno-octulosonate cytidylyltransferase.